The sequence spans 137 residues: Translation initiation factor 2 subunit beta (137 aa).

This sequence belongs to the eIF-2-beta/eIF-5 family. Heterotrimer composed of an alpha, a beta and a gamma chain.

In terms of biological role, eIF-2 functions in the early steps of protein synthesis by forming a ternary complex with GTP and initiator tRNA. The protein is Translation initiation factor 2 subunit beta (eif2b) of Archaeoglobus fulgidus (strain ATCC 49558 / DSM 4304 / JCM 9628 / NBRC 100126 / VC-16).